Consider the following 254-residue polypeptide: Uracil-DNA glycosylase (254 aa).

The active-site Proton acceptor is the Asp-91.

It belongs to the uracil-DNA glycosylase (UDG) superfamily. UNG family.

The protein localises to the host nucleus. The enzyme catalyses Hydrolyzes single-stranded DNA or mismatched double-stranded DNA and polynucleotides, releasing free uracil.. In terms of biological role, excises uracil residues from the DNA which can arise as a result of misincorporation of dUMP residues by DNA polymerase or deamination of cytosines. Therefore may reduce deleterious uracil incorporation into the viral genome, particularly in terminally differentiated cells which lack DNA repair enzymes. In Homo sapiens (Human), this protein is Uracil-DNA glycosylase (U81).